The following is a 538-amino-acid chain: Atos homolog protein B (538 aa).

The span at 1–18 shows a compositional bias: low complexity; it reads MRHVQAEPSPSSEPEAGP. Disordered regions lie at residues 1–103, 153–185, 197–300, and 323–342; these read MRHV…GLLG, NTLHTRDWASPDPGGQGSLGESPGPAPPGQLHT, GGKS…VLDP, and SLRKGPGLLSPPSASPVPTP. Pro residues predominate over residues 227–238; it reads HTPPGPGPPGPC. Ser-254 and Ser-255 each carry phosphoserine. Positions 323–334 are enriched in low complexity; sequence SLRKGPGLLSPP. The interval 348-430 is required for macropage invasion; sequence LLGSFEESLL…VPKVGTIQVT (83 aa). Residues 436-444 form a transactivation domain 1 (TAD1) region; sequence QTVVKMFLV.

Belongs to the ATOS family.

The protein resides in the nucleus. Functionally, transcription regulator that may syncronize transcriptional and translational programs. In Pongo abelii (Sumatran orangutan), this protein is Atos homolog protein B.